The following is a 581-amino-acid chain: Prolactin receptor (581 aa).

The N-terminal stretch at M1 to G24 is a signal peptide. Topologically, residues Q25–M237 are extracellular. 2 consecutive Fibronectin type-III domains span residues P27–P127 and P129–D229. Residues C36 and C46 are joined by a disulfide bond. N59 is a glycosylation site (N-linked (GlcNAc...) asparagine). An intrachain disulfide couples C75 to C86. N132 carries an N-linked (GlcNAc...) asparagine glycan. The Zn(2+) site is built by D211 and H212. Positions W215–S219 match the WSXWS motif motif. The helical transmembrane segment at W238–L258 threads the bilayer. The Cytoplasmic portion of the chain corresponds to K259–P581. A Box 1 motif motif is present at residues I267–K275. Composition is skewed to basic and acidic residues over residues Q323–S349 and H375–T388. 2 disordered regions span residues Q323–T388 and F462–D492.

Belongs to the type I cytokine receptor family. Type 1 subfamily. In terms of assembly, interacts with SMARCA1. Interacts with NEK3 and VAV2 and this interaction is prolactin-dependent. As to expression, expressed in all tissues examined; liver, pituitary, adrenal gland, ovary and fetal liver.

It localises to the membrane. Functionally, this is a receptor for the anterior pituitary hormone prolactin. This chain is Prolactin receptor (PRLR), found in Ovis aries (Sheep).